The following is a 160-amino-acid chain: Phosphopantetheine adenylyltransferase (160 aa).

Residue S9 coordinates substrate. ATP-binding positions include 9 to 10 and H17; that span reads SF. Substrate is bound by residues K41, L73, and R87. ATP is bound by residues 88–90, E98, and 123–129; these read GLR and YTFLSSS.

The protein belongs to the bacterial CoaD family. Homohexamer. It depends on Mg(2+) as a cofactor.

It is found in the cytoplasm. The catalysed reaction is (R)-4'-phosphopantetheine + ATP + H(+) = 3'-dephospho-CoA + diphosphate. It functions in the pathway cofactor biosynthesis; coenzyme A biosynthesis; CoA from (R)-pantothenate: step 4/5. Functionally, reversibly transfers an adenylyl group from ATP to 4'-phosphopantetheine, yielding dephospho-CoA (dPCoA) and pyrophosphate. The protein is Phosphopantetheine adenylyltransferase of Dictyoglomus turgidum (strain DSM 6724 / Z-1310).